A 138-amino-acid chain; its full sequence is Large ribosomal subunit protein uL16c (138 aa).

It belongs to the universal ribosomal protein uL16 family. As to quaternary structure, part of the 50S ribosomal subunit.

Its subcellular location is the plastid. The protein resides in the chloroplast. This is Large ribosomal subunit protein uL16c from Physcomitrium patens (Spreading-leaved earth moss).